The chain runs to 246 residues: Ribonuclease 3 (246 aa).

The region spanning 16 to 144 (LLEFQKQAGL…VIGAYYIDSG (129 aa)) is the RNase III domain. Glu-57 is a Mg(2+) binding site. The active site involves Asp-61. 2 residues coordinate Mg(2+): Asp-130 and Glu-133. Glu-133 is an active-site residue. The 70-residue stretch at 171–240 (DYKSLLQELV…AKVAYENLCS (70 aa)) folds into the DRBM domain.

The protein belongs to the ribonuclease III family. As to quaternary structure, homodimer. The cofactor is Mg(2+).

The protein localises to the cytoplasm. The catalysed reaction is Endonucleolytic cleavage to 5'-phosphomonoester.. In terms of biological role, digests double-stranded RNA. Involved in the processing of primary rRNA transcript to yield the immediate precursors to the large and small rRNAs (23S and 16S). Processes some mRNAs, and tRNAs when they are encoded in the rRNA operon. Processes pre-crRNA and tracrRNA of type II CRISPR loci if present in the organism. The chain is Ribonuclease 3 from Treponema denticola (strain ATCC 35405 / DSM 14222 / CIP 103919 / JCM 8153 / KCTC 15104).